Here is a 248-residue protein sequence, read N- to C-terminus: Triosephosphate isomerase (248 aa).

Residues Asn10 and Lys12 each contribute to the substrate site. The active-site Electrophile is His95. The active-site Proton acceptor is Glu165.

This sequence belongs to the triosephosphate isomerase family. In terms of assembly, homodimer.

The enzyme catalyses D-glyceraldehyde 3-phosphate = dihydroxyacetone phosphate. Its pathway is carbohydrate biosynthesis; gluconeogenesis. The protein operates within carbohydrate degradation; glycolysis; D-glyceraldehyde 3-phosphate from glycerone phosphate: step 1/1. The chain is Triosephosphate isomerase (TPI1) from Kluyveromyces lactis (strain ATCC 8585 / CBS 2359 / DSM 70799 / NBRC 1267 / NRRL Y-1140 / WM37) (Yeast).